The chain runs to 953 residues: Translation initiation factor IF-2 (953 aa).

Disordered regions lie at residues 52-241 (KASK…QQEA) and 279-363 (TKLK…TERK). 3 stretches are compositionally biased toward basic and acidic residues: residues 80 to 89 (TGSEHVEKTQ), 98 to 111 (FKAEREARAKEQAA), and 140 to 188 (QGDK…ENHK). A compositionally biased stretch (polar residues) spans 191–207 (RFTNQKKQGRQEPQSKS). Residues 229 to 241 (RQSETRFRAQQEA) show a composition bias toward basic and acidic residues. Residues 282–291 (KSSNISAKST) are compositionally biased toward polar residues. The segment covering 300-317 (ARPEKNRELTHHSQEGQK) has biased composition (basic and acidic residues). The segment covering 322 to 338 (SWNSQNQVRNQKNSNWN) has biased composition (low complexity). The span at 339-348 (KNKKTKKGKN) shows a compositional bias: basic residues. Positions 454 to 623 (ERAPVVTIMG…LLVAEVEELK (170 aa)) constitute a tr-type G domain. The interval 463–470 (GHVDHGKT) is G1. GTP is bound at residue 463–470 (GHVDHGKT). A G2 region spans residues 488 to 492 (GITQH). A G3 region spans residues 509-512 (DTPG). GTP is bound by residues 509–513 (DTPGH) and 563–566 (NKID). The interval 563 to 566 (NKID) is G4. The tract at residues 599–601 (SAK) is G5.

It belongs to the TRAFAC class translation factor GTPase superfamily. Classic translation factor GTPase family. IF-2 subfamily.

It localises to the cytoplasm. In terms of biological role, one of the essential components for the initiation of protein synthesis. Protects formylmethionyl-tRNA from spontaneous hydrolysis and promotes its binding to the 30S ribosomal subunits. Also involved in the hydrolysis of GTP during the formation of the 70S ribosomal complex. This is Translation initiation factor IF-2 from Streptococcus pyogenes serotype M4 (strain MGAS10750).